Here is a 276-residue protein sequence, read N- to C-terminus: MPELPEVEVTRRGIEPFVAGRRVERVDVRTAMLRWPVPADFAEMLRSREVLGVERRGKYLLFEVDAGWFIVHLGMTGTLRVLPNDAPPPAPAKHDHVDWVFDEFVLRFRDPRRFGAVLWHPRDAGDVRAHPLLASLGVEPFSAAFSGALLFKRTRGRTVSVKQALLAGDIVVGVGNIYASESLFRAGIRPTTAAGRVSLPRYERLADAVRATLADAIERGGSTLRDFVGSNGESGYFQLDCFVYDRAGEPCRVCGAPIRQIVQGQRSTYYCPNCQR.

Residue Pro-2 is the Schiff-base intermediate with DNA of the active site. Glu-3 serves as the catalytic Proton donor. The active-site Proton donor; for beta-elimination activity is Lys-58. DNA-binding residues include His-94, Arg-112, and Arg-157. The segment at 242 to 276 adopts an FPG-type zinc-finger fold; sequence FVYDRAGEPCRVCGAPIRQIVQGQRSTYYCPNCQR. Arg-266 acts as the Proton donor; for delta-elimination activity in catalysis.

Belongs to the FPG family. As to quaternary structure, monomer. Zn(2+) serves as cofactor.

It catalyses the reaction Hydrolysis of DNA containing ring-opened 7-methylguanine residues, releasing 2,6-diamino-4-hydroxy-5-(N-methyl)formamidopyrimidine.. It carries out the reaction 2'-deoxyribonucleotide-(2'-deoxyribose 5'-phosphate)-2'-deoxyribonucleotide-DNA = a 3'-end 2'-deoxyribonucleotide-(2,3-dehydro-2,3-deoxyribose 5'-phosphate)-DNA + a 5'-end 5'-phospho-2'-deoxyribonucleoside-DNA + H(+). In terms of biological role, involved in base excision repair of DNA damaged by oxidation or by mutagenic agents. Acts as a DNA glycosylase that recognizes and removes damaged bases. Has a preference for oxidized purines, such as 7,8-dihydro-8-oxoguanine (8-oxoG). Has AP (apurinic/apyrimidinic) lyase activity and introduces nicks in the DNA strand. Cleaves the DNA backbone by beta-delta elimination to generate a single-strand break at the site of the removed base with both 3'- and 5'-phosphates. This chain is Formamidopyrimidine-DNA glycosylase, found in Burkholderia thailandensis (strain ATCC 700388 / DSM 13276 / CCUG 48851 / CIP 106301 / E264).